A 585-amino-acid polypeptide reads, in one-letter code: Nucleus accumbens-associated protein 2 (585 aa).

Positions 30-94 constitute a BTB domain; that stretch reads CDVSIVVKGQ…CYTGKLTMAA (65 aa). Glycyl lysine isopeptide (Lys-Gly) (interchain with G-Cter in SUMO2) cross-links involve residues Lys-171 and Lys-215. Residues 238 to 261 show a composition bias toward polar residues; sequence PYPQGERTSPGASSLPTTDSSTSY. The interval 238 to 269 is disordered; sequence PYPQGERTSPGASSLPTTDSSTSYHNEDEDDD. Glycyl lysine isopeptide (Lys-Gly) (interchain with G-Cter in SUMO2) cross-links involve residues Lys-296, Lys-426, and Lys-453. The region spanning 348 to 445 is the BEN domain; it reads GSGVYITRGQ…DMCTNARRVR (98 aa). The segment at 541–585 is disordered; the sequence is APEQLPADGQSSPQAFEQGNTSSSRPQTPVATATRRPEGTYAGTL. The segment covering 549–571 has biased composition (polar residues); sequence GQSSPQAFEQGNTSSSRPQTPVA.

Homooligomer; mediated by the BTB domain. Interacts with the NuRD complex. Interacts (via C-terminal part) with HDAC2. Interacts (via BTB domain) with MTA1, MTA2 and MTA3.

It localises to the nucleus. Functionally, functions as a transcriptional repressor through its association with the NuRD complex. Recruits the NuRD complex to the promoter of MDM2, leading to the repression of MDM2 transcription and subsequent stability of p53/TP53. This chain is Nucleus accumbens-associated protein 2 (Nacc2), found in Rattus norvegicus (Rat).